A 356-amino-acid chain; its full sequence is Serine/arginine-rich splicing factor RS41 (356 aa).

RRM domains lie at 2–74 (KPVF…WTKN) and 96–167 (KTLF…YAVK). Residues 73–92 (KNDRGGAGRSGGSRRSSSGL) are disordered. Residues 168–186 (DDDSRGNGYSPERRRDRSP) are compositionally biased toward basic and acidic residues. Residues 168–356 (DDDSRGNGYS…SPSRSPPAEE (189 aa)) form a disordered region. Phosphoserine is present on residues serine 192, serine 194, serine 210, serine 239, serine 254, and serine 274. A compositionally biased stretch (basic and acidic residues) spans 238–253 (LSPDYKRDDRRRERVA). Tandem repeats lie at residues 267–278 (KGRGESRSPPPY), 279–290 (EKRRESRSPPPY), and 291–302 (EKRRESRSPPPY). Positions 267-307 (KGRGESRSPPPYEKRRESRSPPPYEKRRESRSPPPYEKRRE) are 4 X 12 AA tandem repeats of [KE]-[GK]-R -[GR]-E-S-R-S-P-P-P-Y. Over residues 268–306 (GRGESRSPPPYEKRRESRSPPPYEKRRESRSPPPYEKRR) the composition is skewed to basic and acidic residues. One copy of the 4; truncated repeat lies at 303-307 (EKRRE). 5 positions are modified to phosphoserine: serine 309, serine 324, serine 342, serine 347, and serine 351.

It belongs to the splicing factor SR family. RS subfamily. In terms of assembly, component of the spliceosome. Interacts with RCF3 and CPL1. Interacts with DRB1/HYL1 and SE. As to expression, leaves, stem, roots and flowers.

The protein resides in the nucleus. The protein localises to the nucleus speckle. Functionally, required for constitutive and alternative pre-mRNA splicing. Involved in primary miRNA processing and pri-miRNA biogenesis. Binds both intronless and intron-containing pri-miRNAs. The sequence is that of Serine/arginine-rich splicing factor RS41 (RS41) from Arabidopsis thaliana (Mouse-ear cress).